The following is a 419-amino-acid chain: MIDYERSNTTKNINTHHHNPPPSSSSSDLLPDGNGTAVTQKRKRRPAGTPDPEAEVVSLSPRTLLESDRYVCEICNQGFQRDQNLQMHRRRHKVPWKLLKRETNEEVRKRVYVCPEPTCLHHNPCHALGDLVGIKKHFRRKHSNHKQWICERCSKGYAVQSDYKAHLKTCGTRGHSCDCGRVFSRVESFIEHQDTCTVRRSQPSNHRLHEQQQHTTNATQTASTAENNENGDLSIGPILPGHPLQRRQSPPSEQQPSTLLYPFVTNGSIELQLLPSRNCADETSLSLSIGTMDQKTMSEVEKKSYEKGETSLEREEARRETKRQIEIAELEFAEAKRIRQHARAELHKAHLFREEASRRISATMMQITCHNCKQHFQAPAALVPPPPQTHCTDESTSLAVSYMSSATTEGEKASDRASS.

Residues 1-58 are disordered; the sequence is MIDYERSNTTKNINTHHHNPPPSSSSSDLLPDGNGTAVTQKRKRRPAGTPDPEAEVVS. C2H2-type zinc fingers lie at residues 70 to 92, 112 to 142, and 148 to 175; these read YVCE…RRRH, YVCP…RRKH, and WICE…TRGH. Residues Cys-150, Cys-153, His-166, Cys-170, Cys-177, Cys-179, His-192, and Cys-196 each contribute to the Zn(2+) site. The segment at 175-198 adopts a CCHC-type 2; atypical zinc-finger fold; sequence HSCDCGRVFSRVESFIEHQDTCTV. Positions 185–197 are SHR-binding; that stretch reads RVESFIEHQDTCT. 2 disordered regions span residues 200–259 and 298–318; these read RSQP…PSTL and SEVE…EEAR. 2 stretches are compositionally biased toward low complexity: residues 213 to 230 and 246 to 259; these read QHTT…NNEN and RRQS…PSTL. Residues 313 to 349 adopt a coiled-coil conformation; sequence EREEARRETKRQIEIAELEFAEAKRIRQHARAELHKA.

In terms of assembly, homo- and heterodimer of IDD14alpha and IDD14beta. In terms of tissue distribution, expressed in cotyledons and the vasculature of reosette leaves. Weak expression in hypocotyls and floral organs, but not detected in roots and inflorescence stems.

The protein localises to the nucleus. Functionally, transcription factor regulating starch metabolism by binding directly to the promoter of QQS. The IDD14beta isoform attenuates the transcription factor activity by competitively forming heterodimers with reduced DNA-binding capacity. Regulates lateral organ morphogenesis and gravitropic responses. Has a redundant role with IDD16 in directing leaf and floral organ morphogenesis. Involved in the establishment of auxin gradients through the regulation of auxin biosynthesis and transport. The protein is Protein indeterminate-domain 14 of Arabidopsis thaliana (Mouse-ear cress).